A 449-amino-acid chain; its full sequence is Asparagine--tRNA ligase (449 aa).

Belongs to the class-II aminoacyl-tRNA synthetase family. As to quaternary structure, homodimer.

The protein resides in the cytoplasm. It catalyses the reaction tRNA(Asn) + L-asparagine + ATP = L-asparaginyl-tRNA(Asn) + AMP + diphosphate + H(+). The sequence is that of Asparagine--tRNA ligase from Mesomycoplasma hyopneumoniae (strain 7448) (Mycoplasma hyopneumoniae).